Here is an 83-residue protein sequence, read N- to C-terminus: Cytochrome b559 subunit alpha (83 aa).

A helical transmembrane segment spans residues 21-35 (VIHSITIPSLFIAGW). His23 is a binding site for heme.

It belongs to the PsbE/PsbF family. Heterodimer of an alpha subunit and a beta subunit. PSII is composed of 1 copy each of membrane proteins PsbA, PsbB, PsbC, PsbD, PsbE, PsbF, PsbH, PsbI, PsbJ, PsbK, PsbL, PsbM, PsbT, PsbX, PsbY, PsbZ, Psb30/Ycf12, at least 3 peripheral proteins of the oxygen-evolving complex and a large number of cofactors. It forms dimeric complexes. The cofactor is heme b.

The protein resides in the plastid membrane. Its function is as follows. This b-type cytochrome is tightly associated with the reaction center of photosystem II (PSII). PSII is a light-driven water:plastoquinone oxidoreductase that uses light energy to abstract electrons from H(2)O, generating O(2) and a proton gradient subsequently used for ATP formation. It consists of a core antenna complex that captures photons, and an electron transfer chain that converts photonic excitation into a charge separation. The chain is Cytochrome b559 subunit alpha from Cuscuta reflexa (Southern Asian dodder).